The sequence spans 443 residues: Adenylate cyclase (443 aa).

Helical transmembrane passes span 47 to 69 (VLTITAWLAVVVTGSFALMQLAT), 74 to 93 (WYIALINVFTAVTFAIVPLL), 98 to 120 (GLVAPLTFIGTAYVAIFAIGWDV), 124 to 143 (AGAQFFFLVAAALVVLLVGI), 148 to 167 (LAVGLAAVAAGLVIALEFLV), and 180 to 202 (SVSFVLTTVSACGVAVATVWFAL). Topologically, residues 203 to 443 (RDTARAEAVM…RGAEPRTAGV (241 aa)) are cytoplasmic. Residues 251–378 (SVLFADIVGF…DAVNVASRME (128 aa)) enclose the Guanylate cyclase domain. Mg(2+) contacts are provided by Asp256 and Asp300.

Belongs to the adenylyl cyclase class-4/guanylyl cyclase family. Homodimer. Can also exist as monomer. The cofactor is Mg(2+). It depends on Mn(2+) as a cofactor.

Its subcellular location is the cell membrane. It carries out the reaction ATP = 3',5'-cyclic AMP + diphosphate. This is Adenylate cyclase (cya) from Mycobacterium bovis (strain ATCC BAA-935 / AF2122/97).